The primary structure comprises 353 residues: UDP-3-O-acylglucosamine N-acyltransferase (353 aa).

His242 serves as the catalytic Proton acceptor.

Belongs to the transferase hexapeptide repeat family. LpxD subfamily. In terms of assembly, homotrimer.

It catalyses the reaction a UDP-3-O-[(3R)-3-hydroxyacyl]-alpha-D-glucosamine + a (3R)-hydroxyacyl-[ACP] = a UDP-2-N,3-O-bis[(3R)-3-hydroxyacyl]-alpha-D-glucosamine + holo-[ACP] + H(+). It functions in the pathway bacterial outer membrane biogenesis; LPS lipid A biosynthesis. Functionally, catalyzes the N-acylation of UDP-3-O-acylglucosamine using 3-hydroxyacyl-ACP as the acyl donor. Is involved in the biosynthesis of lipid A, a phosphorylated glycolipid that anchors the lipopolysaccharide to the outer membrane of the cell. The chain is UDP-3-O-acylglucosamine N-acyltransferase from Pseudomonas aeruginosa (strain LESB58).